Reading from the N-terminus, the 335-residue chain is Nucleoid-associated protein PputW619_4243 (335 aa).

This sequence belongs to the YejK family.

The protein localises to the cytoplasm. Its subcellular location is the nucleoid. In Pseudomonas putida (strain W619), this protein is Nucleoid-associated protein PputW619_4243.